A 349-amino-acid polypeptide reads, in one-letter code: UDP-galactose/UDP-glucose transporter 4 (349 aa).

Transmembrane regions (helical) follow at residues 23–43 (WQQF…NGIC), 56–76 (GWYF…MYGF), 115–135 (IMFK…IPGL), 140–160 (PVHE…FTLA), 167–187 (NFSI…AFLG), 205–225 (MLFC…ILTG), 248–268 (AMAT…FGAA), and 293–313 (LTEQ…LKMV). Residues 316-349 (PNPNPKSSGSGQTPGKLERVKFEKEDDEESRPLV) are disordered. The span at 340-349 (EDDEESRPLV) shows a compositional bias: acidic residues.

The protein belongs to the nucleotide-sugar transporter family. UDP-galactose:UMP antiporter (TC 2.A.7.11) subfamily.

The protein localises to the membrane. Sugar transporter involved in the transport of nucleotide-sugars from cytoplasm into the Golgi and/or the endoplasmic reticulum. This is UDP-galactose/UDP-glucose transporter 4 from Arabidopsis thaliana (Mouse-ear cress).